Consider the following 316-residue polypeptide: Aspartate carbamoyltransferase catalytic subunit (316 aa).

Residues R60 and T61 each contribute to the carbamoyl phosphate site. Residue K88 coordinates L-aspartate. Residues R110, H138, and Q141 each coordinate carbamoyl phosphate. Residues R171 and R225 each coordinate L-aspartate. Residues G266 and P267 each coordinate carbamoyl phosphate.

This sequence belongs to the aspartate/ornithine carbamoyltransferase superfamily. ATCase family. As to quaternary structure, heterododecamer (2C3:3R2) of six catalytic PyrB chains organized as two trimers (C3), and six regulatory PyrI chains organized as three dimers (R2).

It catalyses the reaction carbamoyl phosphate + L-aspartate = N-carbamoyl-L-aspartate + phosphate + H(+). Its pathway is pyrimidine metabolism; UMP biosynthesis via de novo pathway; (S)-dihydroorotate from bicarbonate: step 2/3. Catalyzes the condensation of carbamoyl phosphate and aspartate to form carbamoyl aspartate and inorganic phosphate, the committed step in the de novo pyrimidine nucleotide biosynthesis pathway. This is Aspartate carbamoyltransferase catalytic subunit from Rhizorhabdus wittichii (strain DSM 6014 / CCUG 31198 / JCM 15750 / NBRC 105917 / EY 4224 / RW1) (Sphingomonas wittichii).